Consider the following 367-residue polypeptide: UDP-N-acetylglucosamine--N-acetylmuramyl-(pentapeptide) pyrophosphoryl-undecaprenol N-acetylglucosamine transferase (367 aa).

UDP-N-acetyl-alpha-D-glucosamine-binding positions include 15 to 17 (TGG), Asn-127, Arg-163, Ser-191, Ile-249, and Gln-294.

Belongs to the glycosyltransferase 28 family. MurG subfamily.

The protein resides in the cell inner membrane. It catalyses the reaction di-trans,octa-cis-undecaprenyl diphospho-N-acetyl-alpha-D-muramoyl-L-alanyl-D-glutamyl-meso-2,6-diaminopimeloyl-D-alanyl-D-alanine + UDP-N-acetyl-alpha-D-glucosamine = di-trans,octa-cis-undecaprenyl diphospho-[N-acetyl-alpha-D-glucosaminyl-(1-&gt;4)]-N-acetyl-alpha-D-muramoyl-L-alanyl-D-glutamyl-meso-2,6-diaminopimeloyl-D-alanyl-D-alanine + UDP + H(+). The protein operates within cell wall biogenesis; peptidoglycan biosynthesis. Cell wall formation. Catalyzes the transfer of a GlcNAc subunit on undecaprenyl-pyrophosphoryl-MurNAc-pentapeptide (lipid intermediate I) to form undecaprenyl-pyrophosphoryl-MurNAc-(pentapeptide)GlcNAc (lipid intermediate II). The chain is UDP-N-acetylglucosamine--N-acetylmuramyl-(pentapeptide) pyrophosphoryl-undecaprenol N-acetylglucosamine transferase from Burkholderia multivorans (strain ATCC 17616 / 249).